Reading from the N-terminus, the 162-residue chain is Cyclic pyranopterin monophosphate synthase (162 aa).

Substrate-binding positions include 79–81 (LCH) and 117–118 (ME). Asp-132 is a catalytic residue.

Belongs to the MoaC family. As to quaternary structure, homohexamer; trimer of dimers.

The catalysed reaction is (8S)-3',8-cyclo-7,8-dihydroguanosine 5'-triphosphate = cyclic pyranopterin phosphate + diphosphate. The protein operates within cofactor biosynthesis; molybdopterin biosynthesis. In terms of biological role, catalyzes the conversion of (8S)-3',8-cyclo-7,8-dihydroguanosine 5'-triphosphate to cyclic pyranopterin monophosphate (cPMP). This is Cyclic pyranopterin monophosphate synthase from Bordetella petrii (strain ATCC BAA-461 / DSM 12804 / CCUG 43448).